We begin with the raw amino-acid sequence, 189 residues long: Peptidyl-tRNA hydrolase (189 aa).

A tRNA-binding site is contributed by tyrosine 15. Histidine 20 (proton acceptor) is an active-site residue. The tRNA site is built by phenylalanine 66, asparagine 68, and asparagine 114.

This sequence belongs to the PTH family. Monomer.

The protein resides in the cytoplasm. The catalysed reaction is an N-acyl-L-alpha-aminoacyl-tRNA + H2O = an N-acyl-L-amino acid + a tRNA + H(+). Hydrolyzes ribosome-free peptidyl-tRNAs (with 1 or more amino acids incorporated), which drop off the ribosome during protein synthesis, or as a result of ribosome stalling. Its function is as follows. Catalyzes the release of premature peptidyl moieties from peptidyl-tRNA molecules trapped in stalled 50S ribosomal subunits, and thus maintains levels of free tRNAs and 50S ribosomes. This Streptococcus thermophilus (strain CNRZ 1066) protein is Peptidyl-tRNA hydrolase.